Reading from the N-terminus, the 232-residue chain is Large ribosomal subunit protein uL1 (232 aa).

This sequence belongs to the universal ribosomal protein uL1 family. Part of the 50S ribosomal subunit.

Functionally, binds directly to 23S rRNA. The L1 stalk is quite mobile in the ribosome, and is involved in E site tRNA release. In terms of biological role, protein L1 is also a translational repressor protein, it controls the translation of the L11 operon by binding to its mRNA. The polypeptide is Large ribosomal subunit protein uL1 (Methylorubrum extorquens (strain CM4 / NCIMB 13688) (Methylobacterium extorquens)).